Reading from the N-terminus, the 234-residue chain is MRLVQLSRHSIAFPSPEGALREPNGLLALGGDLSPTRLLMAYQRGIFPWFSPGDPILWWSPDPRAVLWPESLHISRSMKRFHKRSPYRVTMNYAFGQVIEGCASDREEGTWITRGVVEAYHRLHELGHAHSIEVWRKDELVGGMYGVAQGTLFCGESMFSRMENASKTALLVFCDEFIRHGGKLIDCQVLNDHTASLGACEIPRRDYLNYLNQMRLGRLPNNFWVPRCLFSPQE.

This sequence belongs to the L/F-transferase family.

The protein localises to the cytoplasm. The enzyme catalyses N-terminal L-lysyl-[protein] + L-leucyl-tRNA(Leu) = N-terminal L-leucyl-L-lysyl-[protein] + tRNA(Leu) + H(+). The catalysed reaction is N-terminal L-arginyl-[protein] + L-leucyl-tRNA(Leu) = N-terminal L-leucyl-L-arginyl-[protein] + tRNA(Leu) + H(+). It catalyses the reaction L-phenylalanyl-tRNA(Phe) + an N-terminal L-alpha-aminoacyl-[protein] = an N-terminal L-phenylalanyl-L-alpha-aminoacyl-[protein] + tRNA(Phe). Functionally, functions in the N-end rule pathway of protein degradation where it conjugates Leu, Phe and, less efficiently, Met from aminoacyl-tRNAs to the N-termini of proteins containing an N-terminal arginine or lysine. This Escherichia fergusonii (strain ATCC 35469 / DSM 13698 / CCUG 18766 / IAM 14443 / JCM 21226 / LMG 7866 / NBRC 102419 / NCTC 12128 / CDC 0568-73) protein is Leucyl/phenylalanyl-tRNA--protein transferase.